A 347-amino-acid polypeptide reads, in one-letter code: D-alanine--D-alanine ligase (347 aa).

The ATP-grasp domain occupies 131–333 (KRVLESAGIA…YPELIERLVD (203 aa)). Residue 161 to 216 (EEKLAYPVFTKPSNMGSSVGISKSENQEELRPALELAFRYDSRVLVEQGVNAREIE) coordinates ATP. 3 residues coordinate Mg(2+): Asp-287, Glu-300, and Asn-302.

It belongs to the D-alanine--D-alanine ligase family. Mg(2+) is required as a cofactor. The cofactor is Mn(2+).

It is found in the cytoplasm. The catalysed reaction is 2 D-alanine + ATP = D-alanyl-D-alanine + ADP + phosphate + H(+). It participates in cell wall biogenesis; peptidoglycan biosynthesis. In terms of biological role, cell wall formation. This chain is D-alanine--D-alanine ligase, found in Streptococcus pneumoniae (strain Taiwan19F-14).